Consider the following 206-residue polypeptide: Pyridoxal 5'-phosphate synthase subunit PdxT (206 aa).

59–61 (GES) is an L-glutamine binding site. Cys91 (nucleophile) is an active-site residue. L-glutamine-binding positions include Arg123 and 151-152 (IR). Catalysis depends on charge relay system residues His187 and Glu189.

The protein belongs to the glutaminase PdxT/SNO family. In the presence of PdxS, forms a dodecamer of heterodimers. Only shows activity in the heterodimer.

The catalysed reaction is aldehydo-D-ribose 5-phosphate + D-glyceraldehyde 3-phosphate + L-glutamine = pyridoxal 5'-phosphate + L-glutamate + phosphate + 3 H2O + H(+). The enzyme catalyses L-glutamine + H2O = L-glutamate + NH4(+). It participates in cofactor biosynthesis; pyridoxal 5'-phosphate biosynthesis. Catalyzes the hydrolysis of glutamine to glutamate and ammonia as part of the biosynthesis of pyridoxal 5'-phosphate. The resulting ammonia molecule is channeled to the active site of PdxS. This is Pyridoxal 5'-phosphate synthase subunit PdxT from Mycobacterium sp. (strain JLS).